A 410-amino-acid polypeptide reads, in one-letter code: Zinc transporter ttm-1 (410 aa).

Low complexity-rich tracts occupy residues 1-13 (MTIS…SIRL) and 35-46 (SVSSSDSGVSAD). The interval 1-94 (MTISMISPSS…GAHKHSHDEK (94 aa)) is disordered. Residues 1-103 (MTISMISPSS…KYQKGRRAEK (103 aa)) are Cytoplasmic-facing. Residues 50-69 (HHHHGHGHGHSHGGHGHSHT) show a composition bias toward basic residues. A helical transmembrane segment spans residues 104 to 124 (VLWAVAALSAVFIAAEFVGGF). Topologically, residues 125 to 129 (WAQSL) are extracellular. Residues 130–150 (AIMTDAGHMLSDLLSFIISIF) form a helical membrane-spanning segment. Over 151 to 171 (AIRCARLPASKRLSFGYERAE) the chain is Cytoplasmic. Residues 172–192 (VLGALTSVIILWVLTTVLVVV) traverse the membrane as a helical segment. Over 193 to 208 (AIQRIVNNEHEVDADV) the chain is Extracellular. The chain crosses the membrane as a helical span at residues 209–229 (MLITAGVGVLFNIVMGLVLHF). The Cytoplasmic segment spans residues 230–258 (GTGGHGHTHGGHSSHGHAHDGKNVNVRAA). The helical transmembrane segment at 259–279 (LIHVIGDLVQSIGVLIAALII) threads the bilayer. Residue R280 is a topological domain, extracellular. The chain crosses the membrane as a helical span at residues 281 to 301 (FTGWTLADPICTFLFSIIVLF). The Cytoplasmic portion of the chain corresponds to 302 to 410 (TTVTVMRDIF…CDTCQQQETA (109 aa)).

It belongs to the cation diffusion facilitator (CDF) transporter (TC 2.A.4) family. SLC30A subfamily. As to expression, isoform a: Expressed in the hypodermis and the intestine. Isoform b: Expressed in the intestine, head neurons, seam cells, hypodermis, and the vulva.

The protein resides in the cytoplasmic vesicle membrane. It is found in the apical cell membrane. Promotes excretion of zinc from intestinal cells into the intestinal lumen in response to increased dietary zinc. Involved in cadmium resistance, possibly by promoting its transport from cells. Involved in resistance to B.thuringiensis pore-forming toxin Cry5B downstream of the sek-1 and pmk-1 MAPK kinase pathway. This Caenorhabditis elegans protein is Zinc transporter ttm-1.